Consider the following 173-residue polypeptide: Small ribosomal subunit protein uS5 (173 aa).

The S5 DRBM domain occupies 17–80; that stretch reads WQERVIQIRR…ADGKKQLIEV (64 aa).

It belongs to the universal ribosomal protein uS5 family. Part of the 30S ribosomal subunit. Contacts proteins S4 and S8.

Its function is as follows. With S4 and S12 plays an important role in translational accuracy. Located at the back of the 30S subunit body where it stabilizes the conformation of the head with respect to the body. The protein is Small ribosomal subunit protein uS5 of Synechocystis sp. (strain ATCC 27184 / PCC 6803 / Kazusa).